The chain runs to 377 residues: Chaperone protein DnaJ (377 aa).

In terms of domain architecture, J spans 4–69; the sequence is DYYEVLGVSK…EKRARYDQMG (66 aa). Residues 131-213 form a CR-type zinc finger; that stretch reads GTEKEIQVPR…CSGKGTTRKV (83 aa). Zn(2+) contacts are provided by C144, C147, C161, C164, C187, C190, C201, and C204. CXXCXGXG motif repeat units lie at residues 144–151, 161–168, 187–194, and 201–208; these read CTECHGSG, CSQCHGTG, CPACNGSG, and CKECSGKG.

The protein belongs to the DnaJ family. In terms of assembly, homodimer. Requires Zn(2+) as cofactor.

The protein localises to the cytoplasm. Participates actively in the response to hyperosmotic and heat shock by preventing the aggregation of stress-denatured proteins and by disaggregating proteins, also in an autonomous, DnaK-independent fashion. Unfolded proteins bind initially to DnaJ; upon interaction with the DnaJ-bound protein, DnaK hydrolyzes its bound ATP, resulting in the formation of a stable complex. GrpE releases ADP from DnaK; ATP binding to DnaK triggers the release of the substrate protein, thus completing the reaction cycle. Several rounds of ATP-dependent interactions between DnaJ, DnaK and GrpE are required for fully efficient folding. Also involved, together with DnaK and GrpE, in the DNA replication of plasmids through activation of initiation proteins. This is Chaperone protein DnaJ from Desulfitobacterium hafniense (strain DSM 10664 / DCB-2).